Reading from the N-terminus, the 362-residue chain is MKPSIYSLTRQEMIEWAEAQGEKKFRAAQIWEWLYRKRVQSFEEMTNLSKDLIAKLNDQFVVNPLKQRIVQESADGTVKYLFELPDGMLIETVLMRQHYGLSVCVTTQVGCNIGCTFCASGLIKKQRDLNNGEIVAQIMLVQKYFDERGQDERVSHIVVMGIGEPFDNYDNVLKFVRTVNDDKGLAIGARHITVSTSGLAHKIRDFANEGVQVNLAVSLHAPNNDLRTSIMRINRSFPIEKLFAAIEYYIETTNRRVTFEYIMLNEVNDGVEQAKELAELLKNIKKLSYVNLIPYNPVSEHDQYSRSPKERVMAFYDTLKKNGVNCVVRQEHGTDIDAACGQLRSNTMKRDREKALVENVQP.

Residue Glu-91 is the Proton acceptor of the active site. The 233-residue stretch at 97–329 folds into the Radical SAM core domain; that stretch reads QHYGLSVCVT…KKNGVNCVVR (233 aa). The cysteines at positions 104 and 340 are disulfide-linked. 3 residues coordinate [4Fe-4S] cluster: Cys-111, Cys-115, and Cys-118. S-adenosyl-L-methionine is bound by residues 163-164, Ser-195, 218-220, and Asn-296; these read GE and SLH. The active-site S-methylcysteine intermediate is Cys-340.

The protein belongs to the radical SAM superfamily. RlmN family. The cofactor is [4Fe-4S] cluster.

The protein localises to the cytoplasm. It catalyses the reaction adenosine(2503) in 23S rRNA + 2 reduced [2Fe-2S]-[ferredoxin] + 2 S-adenosyl-L-methionine = 2-methyladenosine(2503) in 23S rRNA + 5'-deoxyadenosine + L-methionine + 2 oxidized [2Fe-2S]-[ferredoxin] + S-adenosyl-L-homocysteine. The catalysed reaction is adenosine(37) in tRNA + 2 reduced [2Fe-2S]-[ferredoxin] + 2 S-adenosyl-L-methionine = 2-methyladenosine(37) in tRNA + 5'-deoxyadenosine + L-methionine + 2 oxidized [2Fe-2S]-[ferredoxin] + S-adenosyl-L-homocysteine. Functionally, specifically methylates position 2 of adenine 2503 in 23S rRNA and position 2 of adenine 37 in tRNAs. The chain is Probable dual-specificity RNA methyltransferase RlmN from Streptococcus sanguinis (strain SK36).